A 412-amino-acid polypeptide reads, in one-letter code: MDTIIHNSTRNNTPPHINDTCNMTGPLFAIRTTEAVLNTFIIFVGGPLNAIVLITQLLTNRVLGYSTPTIYMTNLYSTNFLTLTVLPFIVLSNQWLLPAGVASCKFLSVIYYSSCTVGFATVALIAADRYRVLHKRTYARQSYRSTYMILLLTWLAGLIFSVPAAVYTTVVMHHDANDTNNTNGHATCVLYFVAEEVHTVLLSWKVLLTMVWGAAPVIMMTWFYAFFYSTVQRTSQKQRSRTLTFVSVLLISFVALQTPYVSLMIFNSYATTAWPMQCEHLTLRRTIGTLARVVPHLHCLINPILYALLGHDFLQRMRQCFRGQLLDRRAFLRSQQNQRATAETNLAAGNNSQSVATSLDTNSKNYNQHAKRSVSFNFPSGTWKGGQKTASNDTSTKIPHRLSQSHHNLSGV.

Residues 1–29 are Virion surface-facing; that stretch reads MDTIIHNSTRNNTPPHINDTCNMTGPLFA. Asn7, Asn18, and Asn22 each carry an N-linked (GlcNAc...) asparagine; by host glycan. A helical transmembrane segment spans residues 30–54; it reads IRTTEAVLNTFIIFVGGPLNAIVLI. Residues 55 to 70 lie on the Intravirion side of the membrane; sequence TQLLTNRVLGYSTPTI. A helical transmembrane segment spans residues 71–95; the sequence is YMTNLYSTNFLTLTVLPFIVLSNQW. The Virion surface portion of the chain corresponds to 96–102; it reads LLPAGVA. A helical transmembrane segment spans residues 103 to 129; sequence SCKFLSVIYYSSCTVGFATVALIAADR. Cys104 and Cys188 are joined by a disulfide. Residues 130–138 are Intravirion-facing; it reads YRVLHKRTY. The chain crosses the membrane as a helical span at residues 139-160; it reads ARQSYRSTYMILLLTWLAGLIF. The Virion surface segment spans residues 161–203; that stretch reads SVPAAVYTTVVMHHDANDTNNTNGHATCVLYFVAEEVHTVLLS. Asn177 and Asn180 each carry an N-linked (GlcNAc...) asparagine; by host glycan. Residues 204-224 form a helical membrane-spanning segment; sequence WKVLLTMVWGAAPVIMMTWFY. The Intravirion segment spans residues 225 to 240; sequence AFFYSTVQRTSQKQRS. The helical transmembrane segment at 241 to 267 threads the bilayer; the sequence is RTLTFVSVLLISFVALQTPYVSLMIFN. The Virion surface segment spans residues 268-281; that stretch reads SYATTAWPMQCEHL. The helical transmembrane segment at 282–305 threads the bilayer; that stretch reads TLRRTIGTLARVVPHLHCLINPIL. Residues 306 to 412 are Intravirion-facing; sequence YALLGHDFLQ…SQSHHNLSGV (107 aa). The interval 377–412 is disordered; that stretch reads NFPSGTWKGGQKTASNDTSTKIPHRLSQSHHNLSGV. Over residues 388 to 397 the composition is skewed to polar residues; that stretch reads KTASNDTSTK.

It belongs to the G-protein coupled receptor 1 family. Heterodimerizes with US28.

The protein localises to the virion. It localises to the host cell membrane. It is found in the host cytoplasm. Its function is as follows. G-protein-coupled receptor (vGPCR) that constitutively activates multiple oncogenic signaling pathways including STAT3, AP-1, phospholipase C, NF-kappa-B or cAMP-responsive element (CRE) pathways. Plays an important role in viral reactivation from latency through activation of host CREB1, facilitating its recruitment to the viral major immediate early (MIE) genes. In turn, expression of the MIE-driven genes such as UL123 are de-repressed. Also facilitates virus dissemination via the extracellular and cell-to-cell route. This chain is G-protein coupled receptor homolog UL33 (UL33), found in Human cytomegalovirus (strain AD169) (HHV-5).